A 257-amino-acid chain; its full sequence is Thioesterase frbE (257 aa).

This sequence belongs to the AMT4 thioesterase family.

Its pathway is antifungal biosynthesis. In terms of biological role, thioesterase; part of the gene cluster that mediates the biosynthesis of the antifungal antibiotic FR901469, an inhibitor of beta-1,3-glucansynthase, exerting antifungal activity against the pathogenes Candida albicans and Aspergillus fumigatus. FR901469 is a cyclic depsipeptide containing 12 amino acid residues and a fatty acid chain. The NRPS frbI contains 12 modules responsible for the formation of the depsipeptide backbone which is denoted as Acyl-Thr-Ala-Tyr-Val-4OHPro-Thr-Thr-3OHPro-threo3OHGln-Gly-Thr-Orn-OH (C71H116N14O23). The PKS frbB is probably involved in the production of the hydrocarbon chain, and the acyl-CoA ligase frbC might be involved in the transport of the chain to the peptide ptoduct of frbI. Because FR901469 contains 3 hydroxylated amino acid residues, the 3 oxygenases frbA, frbH, and frbJ might be participating in amino acid hydroxylation. As no thioesterase domains were detected in frbI or frbB, the thioesterases frbD and frbE may instead release and cyclize the products of the NRPS and PKS, respectively. This is Thioesterase frbE from Dothideomycetidae sp. (strain 11243) (Fungal sp. (strain No.11243)).